The sequence spans 431 residues: MKIKKINNQKVQYFFKVSSKELETQLSSAYEKIKSKVEIKGFRKGHVPRKIFENHFGKNNLYSDALENIVQTKYQEILQKKDFESMGMPQVIDLNEKKLKDNQNFTFGLEFIVKPKVILKKYLGLEITKDELEVKDCEVEEKINSLLEKQATLESKTQNNSLELTDTAVFDFEGFVDEKPFEGGTAKNFSLKIGSGQFLPGFEDQMLGMKQGQNKDINITFPSDYHQKKLANKKVIFKVTLHQIKTKKIPQLTDNLVKLLKLANVSTVEELKNNTKKTLLDQKKHKEKENIKKQVIEQLVKNSELQIPQEIISQEKTHLQKEFEKQLKQQNLTLEQYKQYLGIGDEKMEKEFNQQAQKNLQYRLIIEQVAFQEKLTISKEKIEQQYKNLSNHYKVPVNQIKQNLPEKNLQHSLLMDEALDLVINKAVVVTK.

The 86-residue stretch at 165–250 (TDTAVFDFEG…LHQIKTKKIP (86 aa)) folds into the PPIase FKBP-type domain.

Belongs to the FKBP-type PPIase family. Tig subfamily.

The protein localises to the cytoplasm. The catalysed reaction is [protein]-peptidylproline (omega=180) = [protein]-peptidylproline (omega=0). Functionally, involved in protein export. Acts as a chaperone by maintaining the newly synthesized protein in an open conformation. Functions as a peptidyl-prolyl cis-trans isomerase. The chain is Trigger factor from Aster yellows witches'-broom phytoplasma (strain AYWB).